Reading from the N-terminus, the 476-residue chain is MSAVLKSPADSAIADISLAEWGRKEIRIAETEMPGLMAIREEFAAKQPLKGARITGSLHMTIQTAVLIETLKALGADVRWASCNIFSTQDHAAAAIAATGTPVFAIKGETLVDYWDYTHRIFDFGPKGSEGEGPNMILDDGGDATLLMHLGKRAEKDASVLANPGSEEERILFAAIKAKLAEDSTWYSRKSAQIIGVTEETTTGVHRLKEMSAKGTLMFRAINVNDSVTKSKFDNLYGCRESLVDGIKRATDVMIAGKVAVVCGYGDVGKGSAQALRALSAQVWVTEIDPINALQAAMEGFKVVTMEWAADKADIFVTTTGNRDVITFEHMKAMKDQAIVCNIGHFDNEIQVAKLEEHCQWEEIKPQVDHVIFPDGKRIILLAKGRLVNLGCGTGHPSFVMSNSFANQTIAQIELFTHPEGYDVGKVYVLPKHLDEKVARLHLKKVGAMLTELSDEQAAYIGVPKQGPYKPDTYRY.

Substrate is bound by residues Thr61, Asp140, and Glu200. Residue 201-203 coordinates NAD(+); sequence TTT. Residues Lys230 and Asp234 each coordinate substrate. NAD(+) is bound by residues Asn235, 264-269, Glu287, Asn322, 343-345, and Asn389; these read GYGDVG and IGH.

It belongs to the adenosylhomocysteinase family. NAD(+) serves as cofactor.

It is found in the cytoplasm. It carries out the reaction S-adenosyl-L-homocysteine + H2O = L-homocysteine + adenosine. The protein operates within amino-acid biosynthesis; L-homocysteine biosynthesis; L-homocysteine from S-adenosyl-L-homocysteine: step 1/1. Functionally, may play a key role in the regulation of the intracellular concentration of adenosylhomocysteine. The protein is Adenosylhomocysteinase of Acidovorax ebreus (strain TPSY) (Diaphorobacter sp. (strain TPSY)).